We begin with the raw amino-acid sequence, 422 residues long: UDP-N-acetylglucosamine 1-carboxyvinyltransferase (422 aa).

22-23 (KN) provides a ligand contact to phosphoenolpyruvate. Arg92 is a binding site for UDP-N-acetyl-alpha-D-glucosamine. The Proton donor role is filled by Cys116. Cys116 is modified (2-(S-cysteinyl)pyruvic acid O-phosphothioketal). UDP-N-acetyl-alpha-D-glucosamine contacts are provided by residues 121-125 (RPVDQ), Asp307, and Ile329.

This sequence belongs to the EPSP synthase family. MurA subfamily.

The protein resides in the cytoplasm. The catalysed reaction is phosphoenolpyruvate + UDP-N-acetyl-alpha-D-glucosamine = UDP-N-acetyl-3-O-(1-carboxyvinyl)-alpha-D-glucosamine + phosphate. The protein operates within cell wall biogenesis; peptidoglycan biosynthesis. Its function is as follows. Cell wall formation. Adds enolpyruvyl to UDP-N-acetylglucosamine. In Psychrobacter arcticus (strain DSM 17307 / VKM B-2377 / 273-4), this protein is UDP-N-acetylglucosamine 1-carboxyvinyltransferase.